The following is a 463-amino-acid chain: Cytidylate cyclase (463 aa).

Residues 122–231 enclose the Guanylate cyclase domain; that stretch reads VTMFMDIIGS…IGIRIGIDLG (110 aa). Phe125 provides a ligand contact to a ribonucleoside 5'-triphosphate. Positions 127, 128, and 171 each coordinate Mn(2+). Positions 334–454 are AGS-C domain; that stretch reads KPSRIKVVIS…VISNDTVIER (121 aa).

Belongs to the adenylyl cyclase class-4/guanylyl cyclase family. Pyrimidine cyclase subfamily. In terms of assembly, homodimer. Mn(2+) serves as cofactor.

Its subcellular location is the cytoplasm. The catalysed reaction is CTP = 3',5'-cyclic CMP + diphosphate. Functionally, pycsar (pyrimidine cyclase system for antiphage resistance) provides immunity against bacteriophage. The pyrimidine cyclase (PycC) synthesizes cyclic nucleotides in response to infection; these serve as specific second messenger signals. The signal activates the adjacent effector, leading to bacterial cell death and abortive phage infection. A clade E Pycsar system. Its function is as follows. The pyrimidine cyclase gene of a two-gene Pycsar system, generates cyclic CMP (cCMP) from CTP in response to bacteriophage infection. Has little to no activity on ATP, GTP or UTP. Expression of this and adjacent effector Ec303145PycTM (AC P0DV27) confers resistance to bacteriophage P1, T5, lambda-vir and phi27. This Escherichia coli protein is Cytidylate cyclase.